Reading from the N-terminus, the 257-residue chain is NAD kinase (257 aa).

Residue aspartate 46 is the Proton acceptor of the active site. Residues 46-47, 116-117, aspartate 146, alanine 154, 157-162, and asparagine 218 contribute to the NAD(+) site; these read DG, NE, and TAYNLS.

Belongs to the NAD kinase family. Requires a divalent metal cation as cofactor.

The protein localises to the cytoplasm. It catalyses the reaction NAD(+) + ATP = ADP + NADP(+) + H(+). In terms of biological role, involved in the regulation of the intracellular balance of NAD and NADP, and is a key enzyme in the biosynthesis of NADP. Catalyzes specifically the phosphorylation on 2'-hydroxyl of the adenosine moiety of NAD to yield NADP. The protein is NAD kinase of Brucella suis biovar 1 (strain 1330).